A 130-amino-acid chain; its full sequence is Small ribosomal subunit protein uS8 (130 aa).

The protein belongs to the universal ribosomal protein uS8 family. As to quaternary structure, part of the 30S ribosomal subunit. Contacts proteins S5 and S12.

Its function is as follows. One of the primary rRNA binding proteins, it binds directly to 16S rRNA central domain where it helps coordinate assembly of the platform of the 30S subunit. The chain is Small ribosomal subunit protein uS8 from Vibrio vulnificus (strain CMCP6).